Consider the following 949-residue polypeptide: Bifunctional glutamine synthetase adenylyltransferase/adenylyl-removing enzyme (949 aa).

Positions 1 to 450 (MQNQGNKVLS…HFNATVGGTD (450 aa)) are adenylyl removase. The interval 455–949 (NDHWTALFWN…IEIYNEILAI (495 aa)) is adenylyl transferase.

The protein belongs to the GlnE family. It depends on Mg(2+) as a cofactor.

The catalysed reaction is [glutamine synthetase]-O(4)-(5'-adenylyl)-L-tyrosine + phosphate = [glutamine synthetase]-L-tyrosine + ADP. It catalyses the reaction [glutamine synthetase]-L-tyrosine + ATP = [glutamine synthetase]-O(4)-(5'-adenylyl)-L-tyrosine + diphosphate. Involved in the regulation of glutamine synthetase GlnA, a key enzyme in the process to assimilate ammonia. When cellular nitrogen levels are high, the C-terminal adenylyl transferase (AT) inactivates GlnA by covalent transfer of an adenylyl group from ATP to specific tyrosine residue of GlnA, thus reducing its activity. Conversely, when nitrogen levels are low, the N-terminal adenylyl removase (AR) activates GlnA by removing the adenylyl group by phosphorolysis, increasing its activity. The regulatory region of GlnE binds the signal transduction protein PII (GlnB) which indicates the nitrogen status of the cell. This chain is Bifunctional glutamine synthetase adenylyltransferase/adenylyl-removing enzyme, found in Shewanella frigidimarina (strain NCIMB 400).